The primary structure comprises 654 residues: MGNGIGKLSKCLTGGAGRNKKPELSILEPDPLDEGLGHSFCYVRPDPTRVSSSKVHSEEETTTFRTISGASVSANTATPLSTSLYDPYGHIDRAAAFESTTSFSSIPLQPIPRSSGPIVPGSGPLERGFLSGPIERGFMSGPLDGSSGPIDGKTGSDQFQRSFSHGLANLRVGSRKGSLVRVLRRAISKTITRGQNSIVAPIKPVKEPDWVFGSDKTRIHQIENNLTVNSLNFSSEGSLLDDDVSLESQNLQWAQGKAGEDRVHVVVSEEHGWLFVGIYDGFNGPDAPDYLLSHLYPAVHRELKGLLWDDPKTDAKSSDEADVENRDSSSEKKSKNWEESQRRWRCEWDRDLDRLLKDRSNGLDLDPDPNSSDVLKALSQALRKTEEAYLENADMMLDENPELALMGSCVLVMLMKGEDVYLMNVGDSRAVLGQKAESDYWIGKIKQDLERINEETMNDFDGCGDGEGASLVPTLSAFQLTVDHSTNVEEEVNRIRKEHPDDASAVSNERVKGSLKVTRAFGAGFLKQPKWNNALLEMFQIDYKGTSPYINCLPSLYHHRLGSKDQFLILSSDGLYQYFTNEEAVSEVELFITLQPEGDPAQHLVQELLFRAAKKAGMDFHELLEIPQGERRRYHDDVSIVVISLEGRMWKSCV.

Residues 11–30 form a disordered region; sequence CLTGGAGRNKKPELSILEPD. At S147 the chain carries Phosphoserine. One can recognise a PPM-type phosphatase domain in the interval 243–645; it reads DVSLESQNLQ…DDVSIVVISL (403 aa). Residues D280 and G281 each contribute to the Mn(2+) site. Positions 309-336 are disordered; sequence DDPKTDAKSSDEADVENRDSSSEKKSKN. The Mn(2+) site is built by D573 and D636.

The protein belongs to the PP2C family. It depends on Mg(2+) as a cofactor. Mn(2+) is required as a cofactor. As to expression, expressed in seedlings, roots, leaves, stems, young inflorescences, flowers and siliques.

It localises to the nucleus. It carries out the reaction O-phospho-L-seryl-[protein] + H2O = L-seryl-[protein] + phosphate. It catalyses the reaction O-phospho-L-threonyl-[protein] + H2O = L-threonyl-[protein] + phosphate. Its function is as follows. Involved in leaf development regulation. This Arabidopsis thaliana (Mouse-ear cress) protein is Probable protein phosphatase 2C 23 (PLL4).